The chain runs to 94 residues: Small ribosomal subunit protein uS19c (94 aa).

This sequence belongs to the universal ribosomal protein uS19 family.

The protein localises to the plastid. In terms of biological role, protein S19 forms a complex with S13 that binds strongly to the 16S ribosomal RNA. This is Small ribosomal subunit protein uS19c (rps19) from Epifagus virginiana (Beechdrops).